The chain runs to 970 residues: Disease resistance protein RGA2 (970 aa).

Positions Arg135 to Gly438 constitute an NB-ARC domain. Gly182–Thr189 serves as a coordination point for ATP. LRR repeat units follow at residues Phe525 to Leu548, His550 to Leu571, Asn573 to Lys594, Leu595 to Leu619, Leu638 to Lys662, Lys672 to Val697, Leu752 to Val777, Phe787 to Glu811, Phe813 to Asn832, Leu833 to Asn857, Ala859 to Leu882, Ala884 to Gly906, Leu907 to Leu931, and Ile946 to Ile970.

Belongs to the disease resistance NB-LRR family.

In terms of biological role, disease resistance protein. Resistance proteins guard the plant against pathogens that contain an appropriate avirulence protein via a direct or indirect interaction with this avirulence protein. That triggers a defense system which restricts the pathogen growth. Confers a broad resistance to all known races of P.infestans. This Solanum bulbocastanum (Wild potato) protein is Disease resistance protein RGA2 (RGA2).